Reading from the N-terminus, the 2533-residue chain is Highly reducing polyketide synthase azaB (2533 aa).

Residues 7 to 433 (TAPMAIIGMA…GSNAHAILES (427 aa)) form the Ketosynthase family 3 (KS3) domain. Catalysis depends on for beta-ketoacyl synthase activity residues cysteine 180, histidine 315, and histidine 355. The tract at residues 554–821 (WVFTGQGAQW…VEFESSFRHM (268 aa)) is malonyl-CoA:ACP transacylase (MAT) domain. Positions 946–1081 (SDLVGYSQPS…GRISVITTSD (136 aa)) are N-terminal hotdog fold. The 309-residue stretch at 946 to 1254 (SDLVGYSQPS…CQSLGRALDR (309 aa)) folds into the PKS/mFAS DH domain. The dehydratase (DH) domain stretch occupies residues 947–1251 (DLVGYSQPSI…GLTCQSLGRA (305 aa)). Histidine 978 (proton acceptor; for dehydratase activity) is an active-site residue. A C-terminal hotdog fold region spans residues 1097–1254 (YNRRIDPRYM…CQSLGRALDR (158 aa)). The Proton donor; for dehydratase activity role is filled by aspartate 1163. Positions 1419–1554 (TRQVSELVRL…GGKLILMETT (136 aa)) are methyltransferase (CMet) domain. An enoyl reductase (ER) domain region spans residues 1839 to 2155 (GLIDTLVFHD…TGQHMGKIII (317 aa)). The segment at 2178 to 2349 (ASYVIVGGLG…AVSLDLGIVR (172 aa)) is ketoreductase (KR) domain. The Carrier domain occupies 2455-2532 (DAAALICQEL…DLSLRVATKR (78 aa)). At serine 2492 the chain carries O-(pantetheine 4'-phosphoryl)serine.

Its pathway is secondary metabolite biosynthesis. In terms of biological role, highly reducing polyketide synthase; part of the gene cluster that mediates the biosynthesis of azaphilones, a class of fungal metabolites characterized by a highly oxygenated pyrano-quinone bicyclic core and exhibiting a broad range of bioactivities. In the first step, the non-reducing polyketide synthase azaA forms the hexaketide precursor from successive condensations of five malonyl-CoA units, presumably with a simple acetyl-CoA starter unit. The reactive polyketide chain then undergoes a PT-mediated C2-C7 cyclization to afford the aromatic ring and is eventually released as an aldehyde through the R-domain. The putative ketoreductase azaE is proposed to catalyze the reduction of the terminal ketone resulting in the early culture product FK17-P2a. The monooxygenase azaH was demonstrated to be the only enzyme required to convert FK17-P2a to azanigerone E. AzaH first hydroxylates the benzaldehyde intermediate FK17-P2a at C4, which triggers the formation of the pyran-ring to afford azanigerone E. In parallel, the 2,4-dimethylhexanoyl chain is synthesized by the HR-PKS azaB and is proposed to be transferred to the C4-hydroxyl of azanigerone E by the acyltransferase azaD directly from the ACP domain of azaB. Alternatively, the 2,4-dimethyl-hexanoyl chain may be offloaded from the HR-PKS as a carboxylic acid and converted to an acyl-CoA by azaF. The resulting acyl-CoA molecule could then be taken up as a substrate by AzaD to form azanigerone B. To yield the carboxylic acid substituent in azanigerone A, the hydroxypropyl side chain of azanigerone B would need to undergo a C-C oxidative cleavage catalyzed by cytochrome P450 AzaI. AzaI is proposed to act on a vicinal diol that leads to a C-C bond scission either through an alkoxyradical intermediate or a peroxy complex. In the biosynthesis of azanigerone A, azanigerone B first undergoes hydroxylation at C10, possibly catalyzed by one of the two FAD-dependent monooxygenases encoded in the cluster, azaG or azaL, resulting in the vicinal diol azanigerone C. Oxidative cleavage of azanigerone C by azaI would yield the corresponding aldehyde derivative of azanigerone A. Finally, the dehydrogenase azaJ is proposed to convert the aldehyde functional group into the carboxylic acid, completing the conversion from azanigerone B to azanigerone A. Alternatively, the oxidation of aldehyde to carboxylic acid may be catalyzed by the same P450 enzyme azaI via consecutive oxidation or by endogenous alcohol dehydrogenase. This Aspergillus niger (strain ATCC 1015 / CBS 113.46 / FGSC A1144 / LSHB Ac4 / NCTC 3858a / NRRL 328 / USDA 3528.7) protein is Highly reducing polyketide synthase azaB.